The chain runs to 432 residues: Leucine-rich repeat-containing protein ODA7 (432 aa).

LRR repeat units lie at residues asparagine 47–alanine 68, aspartate 69–proline 90, glycine 91–proline 112, alanine 113–alanine 134, and alanine 138–lysine 159. The 39-residue stretch at proline 173 to tryptophan 211 folds into the LRRCT domain. Residues leucine 212–glutamine 243 adopt a coiled-coil conformation. Disordered stretches follow at residues arginine 297–glutamate 332 and glutamate 368–aspartate 432. 2 stretches are compositionally biased toward low complexity: residues glycine 323–glutamate 332 and valine 407–alanine 425.

The protein belongs to the DNAAF1 family. As to quaternary structure, interacts with both outer row and I1 inner row dyneins.

It is found in the cytoplasm. It localises to the cytoskeleton. The protein localises to the cilium axoneme. Its function is as follows. Cilium-specific protein required for cilia structures. Axonemal dynein-associated protein that participates in a structural link between inner and outer row dyneins. This chain is Leucine-rich repeat-containing protein ODA7 (ODA7), found in Chlamydomonas reinhardtii (Chlamydomonas smithii).